We begin with the raw amino-acid sequence, 136 residues long: MRHKIKGRKLNVTSSHRQAMLANMAVALVTHEQIKTTLPKAKELRPYIETLITKAKKADLMVRRSVLSKIKDKTAVEKLINILGTRYKDRPGGYTRIIKAGFRYGDLAPIAYIEFVDRDINAKGNIQQDANEEIKN.

Belongs to the bacterial ribosomal protein bL17 family. In terms of assembly, part of the 50S ribosomal subunit. Contacts protein L32.

The polypeptide is Large ribosomal subunit protein bL17 (Rickettsia peacockii (strain Rustic)).